Reading from the N-terminus, the 355-residue chain is F-box only protein 32 (355 aa).

Positions 62–67 match the Nuclear localization signal motif; sequence KKRKKD. The Nuclear export signal signature appears at 169–173; it reads LLQTL. The 49-residue stretch at 223-271 folds into the F-box domain; the sequence is LTFTDLPLCLQLNIMQRLSDGRDLVSLGQVAPDLHVLSEDRLLWKKLCQ. The Bipartite nuclear localization signal signature appears at 280 to 295; that stretch reads RKRLILSDKGQLDWKK.

As to quaternary structure, part of the SCF (SKP1-CUL1-F-box) E3 ubiquitin-protein ligase complex SCF(FBXO32) formed of CUL1, SKP1, RBX1 and FBXO32.

Its subcellular location is the cytoplasm. The protein localises to the nucleus. The protein operates within protein modification; protein ubiquitination. Substrate recognition component of a SCF (SKP1-CUL1-F-box protein) E3 ubiquitin-protein ligase complex which mediates the ubiquitination and subsequent proteasomal degradation of target proteins. Probably recognizes and binds to phosphorylated target proteins during skeletal muscle atrophy. Recognizes TERF1. This Sus scrofa (Pig) protein is F-box only protein 32 (FBXO32).